Here is a 485-residue protein sequence, read N- to C-terminus: UDP-N-acetylmuramate--L-alanine ligase (485 aa).

120–126 (GSHGKTT) lines the ATP pocket.

It belongs to the MurCDEF family.

The protein resides in the cytoplasm. It catalyses the reaction UDP-N-acetyl-alpha-D-muramate + L-alanine + ATP = UDP-N-acetyl-alpha-D-muramoyl-L-alanine + ADP + phosphate + H(+). Its pathway is cell wall biogenesis; peptidoglycan biosynthesis. In terms of biological role, cell wall formation. The protein is UDP-N-acetylmuramate--L-alanine ligase of Rickettsia africae (strain ESF-5).